The primary structure comprises 272 residues: Secretagogin (272 aa).

EF-hand domains lie at 8–43, 53–89, 101–136, 145–180, 193–228, and 237–272; these read LDAA…MLKK, ERVQ…QEEN, DNSV…LFLQ, KLDE…QENF, ERKR…MMEL, and DLDK…KHKP. Residues Asp-21, Asp-23, Asn-25, Tyr-27, and Glu-32 each coordinate Ca(2+). Ca(2+) contacts are provided by Asp-114, Asp-116, Ser-118, Tyr-120, Glu-125, Asp-158, Asn-160, Asp-162, Arg-164, Asp-169, Asp-206, Ser-208, Thr-210, Glu-217, Asp-250, Asn-252, Asp-254, Lys-256, and Glu-261.

Its subcellular location is the cytoplasm. This chain is Secretagogin (scgn), found in Danio rerio (Zebrafish).